Reading from the N-terminus, the 370-residue chain is Lysophosphatidic acid receptor 4 (370 aa).

Over 1–43 the chain is Extracellular; the sequence is MGDRRFIDFQFQDLNSSLRPRLGNATANNTCIVDDSFKYNLNG. N15, N24, and N28 each carry an N-linked (GlcNAc...) asparagine glycan. The chain crosses the membrane as a helical span at residues 44-64; the sequence is AVYSVVFILGLITNSASLFVF. Topologically, residues 65–73 are cytoplasmic; sequence CFRMKMRSE. The chain crosses the membrane as a helical span at residues 74–94; it reads TAIFITNLALSDLLFVCTLPF. At 95-112 the chain is on the extracellular side; that stretch reads KIFYNFNRHWPFGDTLCK. An intrachain disulfide couples C111 to C188. A helical transmembrane segment spans residues 113–133; the sequence is ISGTAFLTNIYGSMLFLTCIS. Residues 134-155 lie on the Cytoplasmic side of the membrane; it reads VDRFLAIVYPFRSRTIRTRRNS. A helical membrane pass occupies residues 156–176; sequence AIVCAGVWILVLSGGISASLF. Residues 177–203 are Extracellular-facing; that stretch reads STTNVNNATTTCFEGFSKRVWKTYLSK. The N-linked (GlcNAc...) asparagine glycan is linked to N183. Residues 204–224 traverse the membrane as a helical segment; sequence ITIFIEVVGFIIPLILNVSCS. Topologically, residues 225-254 are cytoplasmic; it reads SVVLRTLRKPATLSQIGTNKKKVLKMITVH. A helical membrane pass occupies residues 255–275; it reads MAVFVVCFVPYNSVLFLYALV. The Extracellular portion of the chain corresponds to 276–294; that stretch reads RSQAITNCLLERFAKIMYP. A helical transmembrane segment spans residues 295–315; it reads ITLCLATLNCCFDPFIYYFTL. The Cytoplasmic portion of the chain corresponds to 316–370; that stretch reads ESFQKSFYINTHIRMESLFKTETPLTPKPSLPAIQEEVSDQTTNNGGELMLESTF.

It belongs to the G-protein coupled receptor 1 family.

Its subcellular location is the cell membrane. In terms of biological role, receptor for lysophosphatidic acid (LPA), a mediator of diverse cellular activities. Transduces a signal by increasing the intracellular calcium ions and by stimulating adenylyl cyclase activity. The rank order of potency for agonists of this receptor is 1-oleoyl- &gt; 1-stearoyl- &gt; 1-palmitoyl- &gt; 1-myristoyl- &gt; 1-alkyl- &gt; 1-alkenyl-LPA. This chain is Lysophosphatidic acid receptor 4 (Lpar4), found in Mus musculus (Mouse).